We begin with the raw amino-acid sequence, 873 residues long: Leucine--tRNA ligase (873 aa).

The 'HIGH' region signature appears at 42–52 (PYPSGKLHMGH). The tract at residues 624 to 643 (PVEIGGTEKMSKSKNNGVDP) is disordered. Positions 632 to 636 (KMSKS) match the 'KMSKS' region motif. Lys-635 lines the ATP pocket.

This sequence belongs to the class-I aminoacyl-tRNA synthetase family.

It is found in the cytoplasm. The enzyme catalyses tRNA(Leu) + L-leucine + ATP = L-leucyl-tRNA(Leu) + AMP + diphosphate. The polypeptide is Leucine--tRNA ligase (Pseudomonas aeruginosa (strain LESB58)).